A 379-amino-acid chain; its full sequence is Succinyl-diaminopimelate desuccinylase (379 aa).

Histidine 70 contacts Zn(2+). Aspartate 72 is a catalytic residue. Aspartate 103 contacts Zn(2+). Catalysis depends on glutamate 137, which acts as the Proton acceptor. Zn(2+) contacts are provided by glutamate 138, glutamate 166, and histidine 352.

Belongs to the peptidase M20A family. DapE subfamily. As to quaternary structure, homodimer. The cofactor is Zn(2+). Co(2+) serves as cofactor.

It catalyses the reaction N-succinyl-(2S,6S)-2,6-diaminopimelate + H2O = (2S,6S)-2,6-diaminopimelate + succinate. It participates in amino-acid biosynthesis; L-lysine biosynthesis via DAP pathway; LL-2,6-diaminopimelate from (S)-tetrahydrodipicolinate (succinylase route): step 3/3. Catalyzes the hydrolysis of N-succinyl-L,L-diaminopimelic acid (SDAP), forming succinate and LL-2,6-diaminopimelate (DAP), an intermediate involved in the bacterial biosynthesis of lysine and meso-diaminopimelic acid, an essential component of bacterial cell walls. This Shewanella baltica (strain OS155 / ATCC BAA-1091) protein is Succinyl-diaminopimelate desuccinylase.